Here is a 163-residue protein sequence, read N- to C-terminus: Cytochrome b6-f complex subunit 4 (163 aa).

3 consecutive transmembrane segments (helical) span residues 36–56, 95–115, and 131–151; these read LLYI…GLAV, LLGV…PFLE, and TVFL…TLPI.

It belongs to the cytochrome b family. PetD subfamily. In terms of assembly, the 4 large subunits of the cytochrome b6-f complex are cytochrome b6, subunit IV (17 kDa polypeptide, petD), cytochrome f and the Rieske protein, while the 4 small subunits are petG, petL, petM and petN. The complex functions as a dimer.

It is found in the plastid. The protein localises to the chloroplast thylakoid membrane. Component of the cytochrome b6-f complex, which mediates electron transfer between photosystem II (PSII) and photosystem I (PSI), cyclic electron flow around PSI, and state transitions. The chain is Cytochrome b6-f complex subunit 4 from Drimys granadensis.